The chain runs to 153 residues: MLRNTFTRAGGLSRITSVRFAQTHALSNAAVMDLQSRWENMPSTEQQDIVSKLSERQKLPWAQLTEPEKQAVWYISYGEWGPRRPVLNKGDSSFIAKGVAAGLLFSVGLFAVVRMAGGQDAKTMNKEWQLKSDEYLKSKNANPWGGYSQVQSK.

Residues 1-20 constitute a mitochondrion transit peptide; it reads MLRNTFTRAGGLSRITSVRF. At 21-88 the chain is on the mitochondrial matrix side; it reads AQTHALSNAA…EWGPRRPVLN (68 aa). Residues 89 to 111 traverse the membrane as a helical segment; sequence KGDSSFIAKGVAAGLLFSVGLFA. At 112–153 the chain is on the mitochondrial intermembrane side; sequence VVRMAGGQDAKTMNKEWQLKSDEYLKSKNANPWGGYSQVQSK.

This sequence belongs to the cytochrome c oxidase IV family. In terms of assembly, component of the cytochrome c oxidase (complex IV, CIV), a multisubunit enzyme composed of 12 subunits. The complex is composed of a catalytic core of 3 subunits COX1, COX2 and COX3, encoded in the mitochondrial DNA, and 9 supernumerary subunits COX4, COX5A (or COX5B), COX6, COX7, COX8, COX9, COX12, COX13 and COX26, which are encoded in the nuclear genome. COX5A is the predominant subunit V during aerobic/normoxic growth, it gets replaced by COX5B under anaerobic/hypoxic conditions. The complex exists as a monomer or a dimer and forms supercomplexes (SCs) in the inner mitochondrial membrane with a dimer of ubiquinol-cytochrome c oxidoreductase (cytochrome b-c1 complex, complex III, CIII), resulting in 2 different assemblies (supercomplexes III(2)IV and III(2)IV(2)). COX5A interacts with COR1, CYT1 and QCR6 at the CIII-CIV interface.

It localises to the mitochondrion inner membrane. Its pathway is energy metabolism; oxidative phosphorylation. Functionally, component of the cytochrome c oxidase, the last enzyme in the mitochondrial electron transport chain which drives oxidative phosphorylation. The respiratory chain contains 3 multisubunit complexes succinate dehydrogenase (complex II, CII), ubiquinol-cytochrome c oxidoreductase (cytochrome b-c1 complex, complex III, CIII) and cytochrome c oxidase (complex IV, CIV), that cooperate to transfer electrons derived from NADH and succinate to molecular oxygen, creating an electrochemical gradient over the inner membrane that drives transmembrane transport and the ATP synthase. Cytochrome c oxidase is the component of the respiratory chain that catalyzes the reduction of oxygen to water. Electrons originating from reduced cytochrome c in the intermembrane space (IMS) are transferred via the dinuclear copper A center (CU(A)) of COX2 and heme A of COX1 to the active site in COX1, a binuclear center (BNC) formed by heme A3 and copper B (CU(B)). The BNC reduces molecular oxygen to 2 water molecules using 4 electrons from cytochrome c in the IMS and 4 protons from the mitochondrial matrix. This is Cytochrome c oxidase subunit 5A, mitochondrial (COX5A) from Saccharomyces cerevisiae (strain ATCC 204508 / S288c) (Baker's yeast).